Here is a 236-residue protein sequence, read N- to C-terminus: Purine nucleoside phosphorylase DeoD-type (236 aa).

Position 5 (His5) interacts with a purine D-ribonucleoside. Residues Gly21, Arg25, Arg44, and 88-91 (RIGS) each bind phosphate. A purine D-ribonucleoside is bound by residues 180–182 (EME) and 204–205 (SD). Asp205 serves as the catalytic Proton donor.

This sequence belongs to the PNP/UDP phosphorylase family. Homohexamer; trimer of homodimers.

The enzyme catalyses a purine D-ribonucleoside + phosphate = a purine nucleobase + alpha-D-ribose 1-phosphate. It carries out the reaction a purine 2'-deoxy-D-ribonucleoside + phosphate = a purine nucleobase + 2-deoxy-alpha-D-ribose 1-phosphate. Catalyzes the reversible phosphorolytic breakdown of the N-glycosidic bond in the beta-(deoxy)ribonucleoside molecules, with the formation of the corresponding free purine bases and pentose-1-phosphate. The sequence is that of Purine nucleoside phosphorylase DeoD-type from Hahella chejuensis (strain KCTC 2396).